A 256-amino-acid chain; its full sequence is Chlorophyll a-b binding protein CP24 10B, chloroplastic (256 aa).

Residues 1-45 (MTTTSATAVLNGLSSSFLTGGKKTQALLGAHVTARVTTPKRFVVA) constitute a chloroplast transit peptide. 2 consecutive transmembrane segments (helical) span residues 106–126 (WAMA…IPWF) and 134–154 (AIAP…MGWV).

This sequence belongs to the ELIP/psbS family.

The protein resides in the plastid. It localises to the chloroplast thylakoid membrane. This Solanum lycopersicum (Tomato) protein is Chlorophyll a-b binding protein CP24 10B, chloroplastic (CAP10B).